A 721-amino-acid polypeptide reads, in one-letter code: Far upstream element-binding protein 2 (721 aa).

Positions 1–148 (MSDYSTGGPP…HPPPRTSMTE (148 aa)) are disordered. Serine 2 carries the N-acetylserine modification. The segment covering 8 to 17 (GPPPGPPPPA) has biased composition (pro residues). 2 stretches are compositionally biased toward gly residues: residues 18-28 (GGGGGAAGAGG) and 36-69 (GAGD…GGPG). Arginine 40 is modified (omega-N-methylarginine). Lysine 88 carries the N6-acetyllysine modification. Threonine 101 is subject to Phosphothreonine. Positions 111-123 (RQLEDGDQPDSKK) are enriched in basic and acidic residues. Residue lysine 122 forms a Glycyl lysine isopeptide (Lys-Gly) (interchain with G-Cter in SUMO1); alternate linkage. Lysine 122 is covalently cross-linked (Glycyl lysine isopeptide (Lys-Gly) (interchain with G-Cter in SUMO2); alternate). Phosphoserine occurs at positions 126, 130, 182, 185, 194, and 275. 3 KH domains span residues 145–209 (SMTE…KMML), 234–300 (GTVQ…CEMV), and 323–387 (GGGI…ARII). The segment at 394–422 (LRSGPPGPPGAPGMPPGGRGRGRGQGNWG) is disordered. Positions 398 to 408 (PPGPPGAPGMP) are enriched in pro residues. Gly residues predominate over residues 409 to 422 (PGGRGRGRGQGNWG). Residues arginine 412, arginine 414, arginine 416, and arginine 443 each carry the omega-N-methylarginine modification. In terms of domain architecture, KH 4 spans 425 to 492 (GGEMTFSIPT…QQIDHAKQLI (68 aa)). Residue serine 481 is modified to Phosphoserine. The tract at residues 498-570 (GPLCPVGPGP…HDPNKAAAAA (73 aa)) is disordered. Composition is skewed to pro residues over residues 502 to 521 (PVGP…PFHP) and 529 to 543 (PGAP…PHQY). Repeat 1 spans residues 572-583 (DPNAAWAAYYSH). The segment at 572-685 (DPNAAWAAYY…SAAWAEYYRQ (114 aa)) is 4 X 12 AA imperfect repeats. A compositionally biased stretch (pro residues) spans 588–614 (PPGPVPGPAPAPAAPPAQGEPPQPPPT). Disordered stretches follow at residues 588–650 (PPGP…KAWE), 659–678 (VATG…YSAA), and 688–721 (AYYG…ELHL). 3 tandem repeats follow at residues 618–629 (DYTKAWEEYYKK), 644–655 (DYTKAWEEYYKK), and 674–685 (DYSAAWAEYYRQ).

Belongs to the KHSRP family. Part of a ternary complex containing FUBP2, PTBP1, PTBP2 and HNRPH1. Interacts with PARN. Interacts with PQBP1.

It is found in the nucleus. It localises to the cytoplasm. Part of a ternary complex that binds to the downstream control sequence (DCS) of the pre-mRNA. Mediates exon inclusion in transcripts that are subject to tissue-specific alternative splicing. May interact with single-stranded DNA from the far-upstream element (FUSE). May activate gene expression. Also involved in degradation of inherently unstable mRNAs that contain AU-rich elements (AREs) in their 3'-UTR, possibly by recruiting degradation machinery to ARE-containing mRNAs. Binds to the dendritic targeting element and may play a role in mRNA trafficking. This Rattus norvegicus (Rat) protein is Far upstream element-binding protein 2 (Khsrp).